The chain runs to 206 residues: Protein GET1 (206 aa).

The Lumenal segment spans residues 1–4 (MPSL). The helical transmembrane segment at 5–24 (LITVLFLNVIIYVINTVGAA) threads the bilayer. Topologically, residues 25-110 (TVDGLLWLLY…TFDMTIKIAR (86 aa)) are cytoplasmic. Positions 75–100 (AKLRRRHDKAMEAYEAKNNELTQSKS) form a coiled coil. Residues 111–131 (WAATSGLMLFLQFWYSKTPIF) traverse the membrane as a helical segment. The Lumenal portion of the chain corresponds to 132–155 (TLPPGWIPWQVQWVLSFPRAPMGT). The helical transmembrane segment at 156 to 172 (VSIQIWGGACATVVALV) threads the bilayer. Residues 173 to 206 (GDAMRASLAYVSKPKIDRIKLGATMEGKEGKKRQ) are Cytoplasmic-facing.

The protein belongs to the WRB/GET1 family. In terms of assembly, interacts with GET3.

It is found in the endoplasmic reticulum membrane. Its function is as follows. Required for the post-translational delivery of tail-anchored (TA) proteins to the endoplasmic reticulum. Acts as a membrane receptor for soluble GET3, which recognizes and selectively binds the transmembrane domain of TA proteins in the cytosol. In Ajellomyces capsulatus (strain NAm1 / WU24) (Darling's disease fungus), this protein is Protein GET1.